Reading from the N-terminus, the 448-residue chain is Tubulin beta chain (448 aa).

GTP-binding residues include glutamine 11, glutamate 69, serine 138, glycine 142, threonine 143, glycine 144, asparagine 204, and asparagine 226. Glutamate 69 serves as a coordination point for Mg(2+). A disordered region spans residues 425–448; that stretch reads YQDASISEGEEEYLEEEEPLEHEE. Acidic residues predominate over residues 432–448; it reads EGEEEYLEEEEPLEHEE.

This sequence belongs to the tubulin family. Dimer of alpha and beta chains. A typical microtubule is a hollow water-filled tube with an outer diameter of 25 nm and an inner diameter of 15 nM. Alpha-beta heterodimers associate head-to-tail to form protofilaments running lengthwise along the microtubule wall with the beta-tubulin subunit facing the microtubule plus end conferring a structural polarity. Microtubules usually have 13 protofilaments but different protofilament numbers can be found in some organisms and specialized cells. The cofactor is Mg(2+).

The protein localises to the cytoplasm. It localises to the cytoskeleton. Its function is as follows. Tubulin is the major constituent of microtubules, a cylinder consisting of laterally associated linear protofilaments composed of alpha- and beta-tubulin heterodimers. Microtubules grow by the addition of GTP-tubulin dimers to the microtubule end, where a stabilizing cap forms. Below the cap, tubulin dimers are in GDP-bound state, owing to GTPase activity of alpha-tubulin. The protein is Tubulin beta chain (benR) of Aspergillus parasiticus.